The following is a 460-amino-acid chain: 3-isopropylmalate dehydratase large subunit (460 aa).

3 residues coordinate [4Fe-4S] cluster: C338, C398, and C401.

It belongs to the aconitase/IPM isomerase family. LeuC type 1 subfamily. In terms of assembly, heterodimer of LeuC and LeuD. [4Fe-4S] cluster serves as cofactor.

It catalyses the reaction (2R,3S)-3-isopropylmalate = (2S)-2-isopropylmalate. It participates in amino-acid biosynthesis; L-leucine biosynthesis; L-leucine from 3-methyl-2-oxobutanoate: step 2/4. In terms of biological role, catalyzes the isomerization between 2-isopropylmalate and 3-isopropylmalate, via the formation of 2-isopropylmaleate. In Streptococcus thermophilus (strain CNRZ 1066), this protein is 3-isopropylmalate dehydratase large subunit.